Here is a 420-residue protein sequence, read N- to C-terminus: L-rhamnose isomerase (420 aa).

Positions 262, 294, and 296 each coordinate Mn(2+).

Belongs to the rhamnose isomerase family. Homotetramer. Mn(2+) is required as a cofactor.

It is found in the cytoplasm. It catalyses the reaction L-rhamnopyranose = L-rhamnulose. Its pathway is carbohydrate degradation; L-rhamnose degradation; glycerone phosphate from L-rhamnose: step 1/3. Its function is as follows. Catalyzes the interconversion of L-rhamnose and L-rhamnulose. The polypeptide is L-rhamnose isomerase (Pectobacterium carotovorum subsp. carotovorum (strain PC1)).